An 82-amino-acid chain; its full sequence is RNA-binding protein Hfq (82 aa).

Residues 11-71 (DTFLNHVRKT…ISTIMPGAPI (61 aa)) enclose the Sm domain.

The protein belongs to the Hfq family. In terms of assembly, homohexamer.

In terms of biological role, RNA chaperone that binds small regulatory RNA (sRNAs) and mRNAs to facilitate mRNA translational regulation in response to envelope stress, environmental stress and changes in metabolite concentrations. Also binds with high specificity to tRNAs. In Bradyrhizobium sp. (strain BTAi1 / ATCC BAA-1182), this protein is RNA-binding protein Hfq.